The sequence spans 140 residues: Callisulfakinin (140 aa).

The signal sequence occupies residues 1–30; that stretch reads MYSQQRIFNSKYFIFFIAVLSIFWLPTMSA. Positions 31-109 are excised as a propeptide; it reads RNLENSKNEN…LEYEDEDRSK (79 aa). Tyr-114 is subject to Sulfotyrosine. Phe-119 bears the Phenylalanine amide mark. Tyr-131 carries the sulfotyrosine modification. Phenylalanine amide is present on Phe-136. A propeptide spanning residues 139–140 is cleaved from the precursor; the sequence is SI.

The protein belongs to the gastrin/cholecystokinin family. In brain, it is specifically expressed in four pairs of neurons. Not expressed in other cells of the brain and in the thoracico-abdominal ganglion.

The protein resides in the secreted. Its function is as follows. Callisulfakinin I is a neuropeptide. The existence of Callisulfakinin II is uncertain. The protein is Callisulfakinin of Calliphora vomitoria (Blue bottle fly).